Consider the following 126-residue polypeptide: KH homology domain-containing protein 1B (126 aa).

One can recognise a KH domain in the interval 19–78 (PLVFDMEEDQEDYIFGPDDEYLHTLEVHSNTLIQLERWFSPTGQTRVTVVGPLKARLWVM).

It belongs to the KHDC1 family.

This Mus musculus (Mouse) protein is KH homology domain-containing protein 1B (Khdc1b).